A 91-amino-acid polypeptide reads, in one-letter code: Thioredoxin (91 aa).

The Thioredoxin domain maps to 2–91 (SDSIVHVTDD…SRQSEVEATK (90 aa)). Cys33 and Cys36 are oxidised to a cystine.

The protein belongs to the thioredoxin family.

In terms of biological role, participates in various redox reactions through the reversible oxidation of its active center dithiol to a disulfide and catalyzes dithiol-disulfide exchange reactions. The protein is Thioredoxin (trxA) of Thiocapsa roseopersicina.